The sequence spans 389 residues: Nicotinate phosphoribosyltransferase (389 aa).

Position 216 is a phosphohistidine; by autocatalysis (histidine 216).

This sequence belongs to the NAPRTase family. Transiently phosphorylated on a His residue during the reaction cycle. Phosphorylation strongly increases the affinity for substrates and increases the rate of nicotinate D-ribonucleotide production. Dephosphorylation regenerates the low-affinity form of the enzyme, leading to product release.

The enzyme catalyses nicotinate + 5-phospho-alpha-D-ribose 1-diphosphate + ATP + H2O = nicotinate beta-D-ribonucleotide + ADP + phosphate + diphosphate. It functions in the pathway cofactor biosynthesis; NAD(+) biosynthesis; nicotinate D-ribonucleotide from nicotinate: step 1/1. In terms of biological role, catalyzes the synthesis of beta-nicotinate D-ribonucleotide from nicotinate and 5-phospho-D-ribose 1-phosphate at the expense of ATP. The polypeptide is Nicotinate phosphoribosyltransferase (Ralstonia nicotianae (strain ATCC BAA-1114 / GMI1000) (Ralstonia solanacearum)).